We begin with the raw amino-acid sequence, 38 residues long: Large ribosomal subunit protein bL36c (38 aa).

Belongs to the bacterial ribosomal protein bL36 family.

The protein resides in the plastid. It localises to the apicoplast. The sequence is that of Large ribosomal subunit protein bL36c (rpl36) from Theileria parva (East coast fever infection agent).